Reading from the N-terminus, the 205-residue chain is N-(5'-phosphoribosyl)anthranilate isomerase (205 aa).

Belongs to the TrpF family.

The enzyme catalyses N-(5-phospho-beta-D-ribosyl)anthranilate = 1-(2-carboxyphenylamino)-1-deoxy-D-ribulose 5-phosphate. Its pathway is amino-acid biosynthesis; L-tryptophan biosynthesis; L-tryptophan from chorismate: step 3/5. The sequence is that of N-(5'-phosphoribosyl)anthranilate isomerase from Thermotoga neapolitana (strain ATCC 49049 / DSM 4359 / NBRC 107923 / NS-E).